Consider the following 394-residue polypeptide: Elongation factor Tu 2 (394 aa).

The 195-residue stretch at 10 to 204 folds into the tr-type G domain; the sequence is KPHVNVGTIG…ALDNYIPEPE (195 aa). Residues 19–26 are G1; sequence GHVDHGKT. 19 to 26 contributes to the GTP binding site; that stretch reads GHVDHGKT. Mg(2+) is bound at residue Thr-26. The segment at 60-64 is G2; it reads GITIS. Residues 81–84 are G3; sequence DCPG. Residues 81 to 85 and 136 to 139 each bind GTP; these read DCPGH and NKCD. Residues 136 to 139 are G4; that stretch reads NKCD. A G5 region spans residues 174–176; the sequence is SAL.

It belongs to the TRAFAC class translation factor GTPase superfamily. Classic translation factor GTPase family. EF-Tu/EF-1A subfamily. Monomer.

Its subcellular location is the cytoplasm. It catalyses the reaction GTP + H2O = GDP + phosphate + H(+). In terms of biological role, GTP hydrolase that promotes the GTP-dependent binding of aminoacyl-tRNA to the A-site of ribosomes during protein biosynthesis. This chain is Elongation factor Tu 2, found in Photobacterium profundum (strain SS9).